The sequence spans 429 residues: Adenylosuccinate synthetase (429 aa).

GTP-binding positions include Gly12 to Lys18 and Gly40 to Thr42. The active-site Proton acceptor is Asp13. Positions 13 and 40 each coordinate Mg(2+). Residues Asp13 to Lys16, Asn38 to His41, Thr128, Arg142, Gln224, Thr239, and Arg303 each bind IMP. Catalysis depends on His41, which acts as the Proton donor. Val299–Arg305 lines the substrate pocket. GTP is bound by residues Arg305, Leu331–Asp333, and Ser413–Gly415.

This sequence belongs to the adenylosuccinate synthetase family. As to quaternary structure, homodimer. Requires Mg(2+) as cofactor.

It is found in the cytoplasm. The enzyme catalyses IMP + L-aspartate + GTP = N(6)-(1,2-dicarboxyethyl)-AMP + GDP + phosphate + 2 H(+). The protein operates within purine metabolism; AMP biosynthesis via de novo pathway; AMP from IMP: step 1/2. In terms of biological role, plays an important role in the de novo pathway of purine nucleotide biosynthesis. Catalyzes the first committed step in the biosynthesis of AMP from IMP. The sequence is that of Adenylosuccinate synthetase from Clostridioides difficile (strain 630) (Peptoclostridium difficile).